A 322-amino-acid polypeptide reads, in one-letter code: Transaldolase (322 aa).

Residue Lys136 is the Schiff-base intermediate with substrate of the active site.

The protein belongs to the transaldolase family. Type 1 subfamily. As to quaternary structure, homodimer.

It localises to the cytoplasm. The enzyme catalyses D-sedoheptulose 7-phosphate + D-glyceraldehyde 3-phosphate = D-erythrose 4-phosphate + beta-D-fructose 6-phosphate. It participates in carbohydrate degradation; pentose phosphate pathway; D-glyceraldehyde 3-phosphate and beta-D-fructose 6-phosphate from D-ribose 5-phosphate and D-xylulose 5-phosphate (non-oxidative stage): step 2/3. Functionally, transaldolase is important for the balance of metabolites in the pentose-phosphate pathway. The chain is Transaldolase from Xanthomonas oryzae pv. oryzae (strain KACC10331 / KXO85).